A 145-amino-acid chain; its full sequence is 3-dehydroquinate dehydratase (145 aa).

Tyr-23 serves as the catalytic Proton acceptor. Substrate is bound by residues Asn-75, His-81, and Asp-88. His-101 (proton donor) is an active-site residue. Substrate is bound by residues 102-103 (IS) and Arg-112.

It belongs to the type-II 3-dehydroquinase family. In terms of assembly, homododecamer.

The catalysed reaction is 3-dehydroquinate = 3-dehydroshikimate + H2O. The protein operates within metabolic intermediate biosynthesis; chorismate biosynthesis; chorismate from D-erythrose 4-phosphate and phosphoenolpyruvate: step 3/7. In terms of biological role, catalyzes a trans-dehydration via an enolate intermediate. The chain is 3-dehydroquinate dehydratase from Caldicellulosiruptor saccharolyticus (strain ATCC 43494 / DSM 8903 / Tp8T 6331).